Consider the following 71-residue polypeptide: Prokaryotic ubiquitin-like protein Pup (71 aa).

Low complexity predominate over residues 1-18 (MATRDSGGQSQTGRSQQG). A disordered region spans residues 1–42 (MATRDSGGQSQTGRSQQGEEIEDVTTEASPEVAERHAEITED). Residues 27 to 65 (EASPEVAERHAEITEDVDDLLDEIDSVLEENAEEFVRGY) form an ARC ATPase binding region. A coiled-coil region spans residues 31–60 (EVAERHAEITEDVDDLLDEIDSVLEENAEE). Glu-71 is covalently cross-linked (Isoglutamyl lysine isopeptide (Glu-Lys) (interchain with K-? in acceptor proteins)).

It belongs to the prokaryotic ubiquitin-like protein family. In terms of assembly, strongly interacts with the proteasome-associated ATPase ARC through a hydrophobic interface; the interacting region of Pup lies in its C-terminal half. There is one Pup binding site per ARC hexamer ring.

The protein operates within protein degradation; proteasomal Pup-dependent pathway. In terms of biological role, protein modifier that is covalently attached to lysine residues of substrate proteins, thereby targeting them for proteasomal degradation. The tagging system is termed pupylation. The protein is Prokaryotic ubiquitin-like protein Pup of Salinispora arenicola (strain CNS-205).